A 376-amino-acid polypeptide reads, in one-letter code: Alcohol dehydrogenase class-3 (376 aa).

The Zn(2+) site is built by Cys-47, His-69, Cys-99, Cys-102, Cys-105, Cys-113, and Cys-176.

This sequence belongs to the zinc-containing alcohol dehydrogenase family. Class-III subfamily. Homodimer. Zn(2+) is required as a cofactor. In terms of tissue distribution, expressed in the skeletal muscle, heart, gill filaments and liver, with highest levels in the kidney.

The protein localises to the cytoplasm. The catalysed reaction is a primary alcohol + NAD(+) = an aldehyde + NADH + H(+). The enzyme catalyses a secondary alcohol + NAD(+) = a ketone + NADH + H(+). It catalyses the reaction S-(hydroxymethyl)glutathione + NADP(+) = S-formylglutathione + NADPH + H(+). It carries out the reaction S-(hydroxymethyl)glutathione + NAD(+) = S-formylglutathione + NADH + H(+). The catalysed reaction is S-nitrosoglutathione + NADH + H(+) = S-(hydroxysulfenamide)glutathione + NAD(+). Its function is as follows. Class-III ADH is remarkably ineffective in oxidizing ethanol, but it readily catalyzes the oxidation of long-chain primary alcohols and the oxidation of S-(hydroxymethyl) glutathione. Also acts as a S-nitroso-glutathione reductase by catalyzing the NADH-dependent reduction of S-nitrosoglutathione, thereby regulating protein S-nitrosylation. The protein is Alcohol dehydrogenase class-3 of Sparus aurata (Gilthead sea bream).